The chain runs to 317 residues: Pantothenate kinase (317 aa).

Position 95 to 102 (95 to 102) interacts with ATP; sequence GSVAVGKS.

The protein belongs to the prokaryotic pantothenate kinase family.

The protein localises to the cytoplasm. The enzyme catalyses (R)-pantothenate + ATP = (R)-4'-phosphopantothenate + ADP + H(+). Its pathway is cofactor biosynthesis; coenzyme A biosynthesis; CoA from (R)-pantothenate: step 1/5. The sequence is that of Pantothenate kinase from Rhodopseudomonas palustris (strain BisB18).